A 151-amino-acid polypeptide reads, in one-letter code: Small ribosomal subunit protein uS19 (151 aa).

This sequence belongs to the universal ribosomal protein uS19 family.

Protein S19 forms a complex with S13 that binds strongly to the 16S ribosomal RNA. This is Small ribosomal subunit protein uS19 from Picrophilus torridus (strain ATCC 700027 / DSM 9790 / JCM 10055 / NBRC 100828 / KAW 2/3).